A 451-amino-acid polypeptide reads, in one-letter code: Probable metal transport system membrane protein CT_069 (451 aa).

8 consecutive transmembrane segments (helical) span residues 14-34, 38-58, 70-90, 100-120, 145-165, 192-212, 233-253, and 269-289; these read SFLA…ILLV, PLLS…GALL, WVII…ISFL, SALC…VSYV, TEAK…WWWY, VLVF…ILLI, ILIL…YFSV, and ILPT…LCLI. Positions 432-451 are disordered; sequence PDYDPHQREIPKRTRKSDGC. The segment covering 434-451 has biased composition (basic and acidic residues); the sequence is YDPHQREIPKRTRKSDGC.

This sequence belongs to the ABC-3 integral membrane protein family.

It localises to the cell inner membrane. Part of an ATP-driven transport system CT_067/CT_068/CT_069/CT_070 for a metal. In Chlamydia trachomatis serovar D (strain ATCC VR-885 / DSM 19411 / UW-3/Cx), this protein is Probable metal transport system membrane protein CT_069.